Reading from the N-terminus, the 752-residue chain is Granule-bound starch synthase 2, chloroplastic/amyloplastic (752 aa).

A chloroplast-targeting transit peptide spans M1–R57. Disordered regions lie at residues L116–A146 and F224–P253. Residue K275 coordinates ADP-alpha-D-glucose.

Belongs to the glycosyltransferase 1 family. Bacterial/plant glycogen synthase subfamily. In terms of tissue distribution, widely expressed.

The protein resides in the plastid. It localises to the chloroplast. Its subcellular location is the amyloplast. It carries out the reaction [(1-&gt;4)-alpha-D-glucosyl](n) + ADP-alpha-D-glucose = [(1-&gt;4)-alpha-D-glucosyl](n+1) + ADP + H(+). It functions in the pathway glycan biosynthesis; starch biosynthesis. This is Granule-bound starch synthase 2, chloroplastic/amyloplastic from Pisum sativum (Garden pea).